Here is a 258-residue protein sequence, read N- to C-terminus: Imidazole glycerol phosphate synthase subunit HisF (258 aa).

Residues Asp-12 and Asp-131 contribute to the active site.

This sequence belongs to the HisA/HisF family. As to quaternary structure, heterodimer of HisH and HisF.

The protein localises to the cytoplasm. The catalysed reaction is 5-[(5-phospho-1-deoxy-D-ribulos-1-ylimino)methylamino]-1-(5-phospho-beta-D-ribosyl)imidazole-4-carboxamide + L-glutamine = D-erythro-1-(imidazol-4-yl)glycerol 3-phosphate + 5-amino-1-(5-phospho-beta-D-ribosyl)imidazole-4-carboxamide + L-glutamate + H(+). It participates in amino-acid biosynthesis; L-histidine biosynthesis; L-histidine from 5-phospho-alpha-D-ribose 1-diphosphate: step 5/9. Its function is as follows. IGPS catalyzes the conversion of PRFAR and glutamine to IGP, AICAR and glutamate. The HisF subunit catalyzes the cyclization activity that produces IGP and AICAR from PRFAR using the ammonia provided by the HisH subunit. The chain is Imidazole glycerol phosphate synthase subunit HisF from Pseudarthrobacter chlorophenolicus (strain ATCC 700700 / DSM 12829 / CIP 107037 / JCM 12360 / KCTC 9906 / NCIMB 13794 / A6) (Arthrobacter chlorophenolicus).